Reading from the N-terminus, the 104-residue chain is Cysteine-rich and transmembrane domain-containing protein 1 (104 aa).

Composition is skewed to pro residues over residues 1–25 and 33–47; these read MNPE…PQQP and GAPP…PPQG. Residues 1–47 are disordered; that stretch reads MNPENPPPYPGPGPTAPYPPYPQQPMGPMGPMGAPPPQGYPYPPPQG. Residues 81 to 98 form a helical membrane-spanning segment; the sequence is LGPSTCLTACWTALCCCC.

This sequence belongs to the CYSTM1 family.

The protein resides in the membrane. This is Cysteine-rich and transmembrane domain-containing protein 1 (Cystm1) from Mus musculus (Mouse).